We begin with the raw amino-acid sequence, 526 residues long: MSNLFDSDSPTNLAEYSVSELSGSIKRTIETAFDQVRVRGEISGYRGPHSSGHAYFALKDDRARIDAVIWKGTFSRLKFRPEEGMEVIATGKVTTFPGSSKYQIVIETLEPAGAGALMALIEERKRRLGAEGLFDAARKKRLPFMPHVIGVVTSPTGAVIRDILHRISDRFPVHVLVWPVKVQGEGSGEEVANAIRGFNALEPASAISRPDVLIVARGGGSLEDLWSFNDEIVVRAAAESRIPLISAVGHETDWTLIDYAADVRAPTPTGAAEMAVPVKAELEAQAAALAARLQGCMNRQMDQRRQSVRSLMRAFPSLDQLLALPRRRFDEAAAGLGRGLELNTINKRRGFERVIAHLRPDLLSGRISERRQMLNERMVRAERMVERLIDRSASRVERAEAILASLPARLKAQTDRSRERLGNLTRHADTAIRHQLTRARAELSAQDRVLQSLSYKNVLRRGYAVIRDEDNRPVSQAAALSAGMGIAIEFADGRIGAMTTEGGTPPGGAKKRSTKPAEPTKQGSLF.

A disordered region spans residues 497 to 526; that stretch reads AMTTEGGTPPGGAKKRSTKPAEPTKQGSLF.

It belongs to the XseA family. In terms of assembly, heterooligomer composed of large and small subunits.

The protein localises to the cytoplasm. It catalyses the reaction Exonucleolytic cleavage in either 5'- to 3'- or 3'- to 5'-direction to yield nucleoside 5'-phosphates.. In terms of biological role, bidirectionally degrades single-stranded DNA into large acid-insoluble oligonucleotides, which are then degraded further into small acid-soluble oligonucleotides. The protein is Exodeoxyribonuclease 7 large subunit of Rhizobium etli (strain ATCC 51251 / DSM 11541 / JCM 21823 / NBRC 15573 / CFN 42).